Here is a 274-residue protein sequence, read N- to C-terminus: Nitrogenase iron protein (274 aa).

ATP is bound at residue 8-15 (GKGGIGKS). Cysteine 94 serves as a coordination point for [4Fe-4S] cluster. Arginine 97 is subject to ADP-ribosylarginine; by dinitrogenase reductase ADP-ribosyltransferase. Residue cysteine 131 participates in [4Fe-4S] cluster binding.

Belongs to the NifH/BchL/ChlL family. As to quaternary structure, homodimer. Requires [4Fe-4S] cluster as cofactor. Post-translationally, the reversible ADP-ribosylation of Arg-97 inactivates the nitrogenase reductase and regulates nitrogenase activity.

It catalyses the reaction N2 + 8 reduced [2Fe-2S]-[ferredoxin] + 16 ATP + 16 H2O = H2 + 8 oxidized [2Fe-2S]-[ferredoxin] + 2 NH4(+) + 16 ADP + 16 phosphate + 6 H(+). The key enzymatic reactions in nitrogen fixation are catalyzed by the nitrogenase complex, which has 2 components: the iron protein and the molybdenum-iron protein. In Chlorobium luteolum (strain DSM 273 / BCRC 81028 / 2530) (Pelodictyon luteolum), this protein is Nitrogenase iron protein.